Here is a 201-residue protein sequence, read N- to C-terminus: Large ribosomal subunit protein uL4 (201 aa).

Residues 44 to 68 form a disordered region; sequence KAQKTRSEVAGTTKKSKKQKGGGAR.

This sequence belongs to the universal ribosomal protein uL4 family. As to quaternary structure, part of the 50S ribosomal subunit.

One of the primary rRNA binding proteins, this protein initially binds near the 5'-end of the 23S rRNA. It is important during the early stages of 50S assembly. It makes multiple contacts with different domains of the 23S rRNA in the assembled 50S subunit and ribosome. Functionally, forms part of the polypeptide exit tunnel. The chain is Large ribosomal subunit protein uL4 from Xanthomonas campestris pv. campestris (strain 8004).